We begin with the raw amino-acid sequence, 314 residues long: ATP synthase gamma chain (314 aa).

This sequence belongs to the ATPase gamma chain family. As to quaternary structure, F-type ATPases have 2 components, CF(1) - the catalytic core - and CF(0) - the membrane proton channel. CF(1) has five subunits: alpha(3), beta(3), gamma(1), delta(1), epsilon(1). CF(0) has three main subunits: a, b and c.

The protein localises to the cellular thylakoid membrane. Produces ATP from ADP in the presence of a proton gradient across the membrane. The gamma chain is believed to be important in regulating ATPase activity and the flow of protons through the CF(0) complex. This chain is ATP synthase gamma chain, found in Rippkaea orientalis (strain PCC 8801 / RF-1) (Cyanothece sp. (strain PCC 8801)).